Consider the following 282-residue polypeptide: Urease accessory protein UreD (282 aa).

It belongs to the UreD family. UreD, UreF and UreG form a complex that acts as a GTP-hydrolysis-dependent molecular chaperone, activating the urease apoprotein by helping to assemble the nickel containing metallocenter of UreC. The UreE protein probably delivers the nickel.

Its subcellular location is the cytoplasm. Required for maturation of urease via the functional incorporation of the urease nickel metallocenter. This chain is Urease accessory protein UreD, found in Methylobacterium sp. (strain 4-46).